A 166-amino-acid chain; its full sequence is Pyruvoyl-dependent arginine decarboxylase (166 aa).

Position 45 is a pyruvic acid (Ser) (S45).

Belongs to the PdaD family. Pyruvate serves as cofactor.

It catalyses the reaction L-arginine + H(+) = agmatine + CO2. The protein is Pyruvoyl-dependent arginine decarboxylase of Methanocella arvoryzae (strain DSM 22066 / NBRC 105507 / MRE50).